A 30-amino-acid polypeptide reads, in one-letter code: Cyclotide hyen-K (30 aa).

The cyclopeptide (Gly-Asn) cross-link spans G1–N30. Cystine bridges form between C4–C20, C8–C22, and C13–C27.

This is a cyclic peptide. In terms of tissue distribution, detected in seeds (at protein level).

In terms of biological role, probably participates in a plant defense mechanism. The polypeptide is Cyclotide hyen-K (Pigea enneasperma (Spade flower)).